A 542-amino-acid polypeptide reads, in one-letter code: Putative serine/threonine-protein kinase L205 (542 aa).

Positions 20-30 are enriched in basic and acidic residues; that stretch reads FEKKSVGHNSD. Residues 20–49 form a disordered region; that stretch reads FEKKSVGHNSDDEYDDTVPYNEDDETSEEE. A compositionally biased stretch (acidic residues) spans 31-49; it reads DEYDDTVPYNEDDETSEEE. In terms of domain architecture, Protein kinase spans 69–538; sequence YLLLKKIGSG…ADELLKHPWL (470 aa). Residues 75-83 and Lys-98 contribute to the ATP site; that span reads IGSGNNASV. The active-site Proton acceptor is Asp-201. Positions 278 to 314 are disordered; the sequence is EELIPDDPDNNEKYYDSTDSEEYDYSDNSDYYDDDED. Positions 295–314 are enriched in acidic residues; sequence TDSEEYDYSDNSDYYDDDED.

It belongs to the protein kinase superfamily. Ser/Thr protein kinase family.

It catalyses the reaction L-seryl-[protein] + ATP = O-phospho-L-seryl-[protein] + ADP + H(+). The enzyme catalyses L-threonyl-[protein] + ATP = O-phospho-L-threonyl-[protein] + ADP + H(+). The protein is Putative serine/threonine-protein kinase L205 of Acanthamoeba polyphaga (Amoeba).